The primary structure comprises 154 residues: NADPH-dependent 7-cyano-7-deazaguanine reductase (154 aa).

Polar residues predominate over residues 1–21 (MPNTDVSSLSMLGQQTETAQS). The segment at 1 to 28 (MPNTDVSSLSMLGQQTETAQSPEEAVLE) is disordered. Residue C52 is the Thioimide intermediate of the active site. The Proton donor role is filled by D59. Residues 74–76 (VES) and 93–94 (HE) contribute to the substrate site.

Belongs to the GTP cyclohydrolase I family. QueF type 1 subfamily.

The protein localises to the cytoplasm. The catalysed reaction is 7-aminomethyl-7-carbaguanine + 2 NADP(+) = 7-cyano-7-deazaguanine + 2 NADPH + 3 H(+). The protein operates within tRNA modification; tRNA-queuosine biosynthesis. Catalyzes the NADPH-dependent reduction of 7-cyano-7-deazaguanine (preQ0) to 7-aminomethyl-7-deazaguanine (preQ1). The protein is NADPH-dependent 7-cyano-7-deazaguanine reductase of Rhizobium johnstonii (strain DSM 114642 / LMG 32736 / 3841) (Rhizobium leguminosarum bv. viciae).